Here is a 65-residue protein sequence, read N- to C-terminus: Large ribosomal subunit protein bL35 (65 aa).

The segment at 1-26 (MPKIKTVRGAAKRFKKTASGGFKRKQ) is disordered. The segment covering 10-26 (AAKRFKKTASGGFKRKQ) has biased composition (basic residues).

The protein belongs to the bacterial ribosomal protein bL35 family.

This Mannheimia succiniciproducens (strain KCTC 0769BP / MBEL55E) protein is Large ribosomal subunit protein bL35.